Here is a 336-residue protein sequence, read N- to C-terminus: Cell division protein ZipA (336 aa).

The Periplasmic portion of the chain corresponds to 1–2 (ME). The helical transmembrane segment at 3–23 (LHILFFILAGLLIAVLIGFSL) threads the bilayer. Residues 24-336 (WSARREKSRI…SRQSYLARVS (313 aa)) lie on the Cytoplasmic side of the membrane. The segment at 57-76 (SLNPQSYAQTTGQHGETEAD) is disordered. Polar residues predominate over residues 59–70 (NPQSYAQTTGQH).

It belongs to the ZipA family. In terms of assembly, interacts with FtsZ via their C-terminal domains.

The protein resides in the cell inner membrane. Its function is as follows. Essential cell division protein that stabilizes the FtsZ protofilaments by cross-linking them and that serves as a cytoplasmic membrane anchor for the Z ring. Also required for the recruitment to the septal ring of downstream cell division proteins. The protein is Cell division protein ZipA of Actinobacillus pleuropneumoniae serotype 7 (strain AP76).